Consider the following 500-residue polypeptide: 7-alpha-hydroxycholest-4-en-3-one 12-alpha-hydroxylase (500 aa).

A helical membrane pass occupies residues 4-24 (WCTVLGALLTVVGCLCLSLLL). At S325 the chain carries Phosphoserine. Residue C439 coordinates heme.

This sequence belongs to the cytochrome P450 family. It depends on heme as a cofactor. Expressed in liver.

It localises to the endoplasmic reticulum membrane. It is found in the microsome membrane. The enzyme catalyses 7alpha-hydroxycholest-4-en-3-one + reduced [NADPH--hemoprotein reductase] + O2 = 7alpha,12alpha-dihydroxycholest-4-en-3-one + oxidized [NADPH--hemoprotein reductase] + H2O + H(+). It catalyses the reaction 5beta-cholestane-3alpha,7alpha-diol + reduced [NADPH--hemoprotein reductase] + O2 = 5beta-cholestane-3alpha,7alpha,12alpha-triol + oxidized [NADPH--hemoprotein reductase] + H2O + H(+). It carries out the reaction chenodeoxycholate + reduced [NADPH--hemoprotein reductase] + O2 = cholate + oxidized [NADPH--hemoprotein reductase] + H2O + H(+). The protein operates within lipid metabolism; bile acid biosynthesis. Functionally, a cytochrome P450 monooxygenase involved in primary bile acid biosynthesis. Catalyzes the 12alpha-hydroxylation of 7alpha-hydroxy-4-cholesten-3-one, an intermediate metabolite in cholic acid biosynthesis. Controls biliary balance of cholic acid and chenodeoxycholic acid, ultimately regulating the intestinal absorption of dietary lipids. Mechanistically, uses molecular oxygen inserting one oxygen atom into a substrate, and reducing the second into a water molecule, with two electrons provided by NADPH via cytochrome P450 reductase (CPR; NADPH--hemoprotein reductase). In Mus musculus (Mouse), this protein is 7-alpha-hydroxycholest-4-en-3-one 12-alpha-hydroxylase (Cyp8b1).